Reading from the N-terminus, the 541-residue chain is Cytochrome P450 monooxygenase claW (541 aa).

Residues 12–32 (VINALVILFSFWAFLSLIRVI) form a helical membrane-spanning segment. A heme-binding site is contributed by C480.

The protein belongs to the cytochrome P450 family. Requires heme as cofactor.

The protein localises to the membrane. It participates in secondary metabolite biosynthesis; terpenoid biosynthesis. Its function is as follows. Cytochrome P450 monooxygenase; part of the gene cluster that mediates the biosynthesis of clavilactone A, a meroterpenoid that features a unique benzo-fused ten-membered carbocyclic ring unit with an alpha,beta-epoxy-gamma-lactone moiety, forming an intriguing 10/5/3 tricyclic nested skeleton. Cytochrome P450 monooxygenases claO, claP, claQ, claU, and claW are close orthologs, suggesting that a redundant function or pseudogenes are present in the cla cluster. These monoxygenases are not involved in clavilactone A biosynthesis nor its modification. ClaR, ClaS and ClaT are sufficient to produce clavilactone A. The biosynthesis begins with the prenyltransferase claS that transfers geranyl pyrophosphate (GPP) to hydroquinone to produces geranylhydroquinone. The cytochrome P450 monooxygenase claR then catalyzes the diradical coupling reaction between the intramolecular hydroquinone and allyl moieties to form the benzo-fused ten-membered carbocyclic ring unit of wigantol. Finally the cytochrome P450 monooxygenase claT exquisitely and stereoselectively assembles the alpha,beta-epoxy-gamma-lactone moiety, producing clavilactone A via arnebinol A. The chain is Cytochrome P450 monooxygenase claW from Ampulloclitocybe clavipes (Club foot).